Here is a 592-residue protein sequence, read N- to C-terminus: Malic enzyme, hydrogenosomal (592 aa).

The transit peptide at 1-27 (MLAPIQTIARPVSSILPATGALAAKRT) directs the protein to the hydrogenosome. Tyr134 acts as the Proton donor in catalysis. Residue 182 to 205 (VTDGSRILGLGDLGAGGMQIPIGK) coordinates NADP(+). Residue Arg187 coordinates NAD(+). The active-site Proton acceptor is Lys205. The a divalent metal cation site is built by Glu276, Asp277, and Asp300. NAD(+) is bound at residue Asp300. Residue 335-352 (GAGSSGVGVCETIVDCIV) coordinates NADP(+). Residue Asn443 participates in NAD(+) binding.

Belongs to the malic enzymes family. The cofactor is Mg(2+). Mn(2+) serves as cofactor.

The protein resides in the hydrogenosome. The enzyme catalyses (S)-malate + NADP(+) = pyruvate + CO2 + NADPH. It carries out the reaction oxaloacetate + H(+) = pyruvate + CO2. This Neocallimastix frontalis (Rumen fungus) protein is Malic enzyme, hydrogenosomal.